We begin with the raw amino-acid sequence, 110 residues long: MAKPIEVHDSDFAEKVLKSKTPVVVDFWAPWCGPCRVIAPILDKLAGEYAGRLTIAKVNTDDNVQYASQLGIQGIPTLVIFKDGREVGRLVGARPEAMYREIFDKVLAMA.

A Thioredoxin domain is found at 3 to 108 (KPIEVHDSDF…YREIFDKVLA (106 aa)). An intrachain disulfide couples Cys-32 to Cys-35. Residue Lys-105 is modified to N6,N6-dimethyllysine; alternate. An N6-methyllysine; alternate modification is found at Lys-105.

Functionally, participates in various redox reactions through the reversible oxidation of its active center dithiol to a disulfide and catalyzes dithiol-disulfide exchange reactions. The sequence is that of Thioredoxin (trxA) from Chloroflexus aurantiacus (strain ATCC 29366 / DSM 635 / J-10-fl).